The sequence spans 104 residues: PLAT domain-containing protein 3 (104 aa).

In terms of domain architecture, PLAT spans 1–104 (MSLRLYDSYG…LARDASPYEL (104 aa)).

The sequence is that of PLAT domain-containing protein 3 from Arabidopsis thaliana (Mouse-ear cress).